The following is a 756-amino-acid chain: Ribonucleoside-diphosphate reductase subunit alpha (756 aa).

The 91-residue stretch at 5 to 95 (LMVTKRDGTQ…IFHLRKKAYG (91 aa)) folds into the ATP-cone domain. Residues lysine 9, 15-21 (EQINLDK), threonine 55, and lysine 91 each bind ATP. Threonine 209 contributes to the GDP binding site. Cysteine 225 and cysteine 462 are oxidised to a cystine. Residues 232–234 (DSL), arginine 262, and arginine 269 each bind dTTP. Asparagine 437 contacts GDP. The active-site Proton acceptor is the asparagine 437. Cysteine 439 serves as the catalytic Cysteine radical intermediate. GDP is bound by residues glutamate 441 and 623–625 (ETS). The active-site Proton acceptor is the glutamate 441.

The protein belongs to the ribonucleoside diphosphate reductase large chain family. Tetramer of two alpha and two beta subunits.

The enzyme catalyses a 2'-deoxyribonucleoside 5'-diphosphate + [thioredoxin]-disulfide + H2O = a ribonucleoside 5'-diphosphate + [thioredoxin]-dithiol. Under complex allosteric control mediated by deoxynucleoside triphosphates and ATP binding to separate specificity and activation sites on the alpha subunit. The type of nucleotide bound at the specificity site determines substrate preference. It seems probable that ATP makes the enzyme reduce CDP and UDP, dGTP favors ADP reduction and dTTP favors GDP reduction. Stimulated by ATP and inhibited by dATP binding to the activity site. In terms of biological role, provides the precursors necessary for DNA synthesis. Catalyzes the biosynthesis of deoxyribonucleotides from the corresponding ribonucleotides. The polypeptide is Ribonucleoside-diphosphate reductase subunit alpha (nrdA) (Haemophilus influenzae (strain ATCC 51907 / DSM 11121 / KW20 / Rd)).